The following is a 491-amino-acid chain: Cobyric acid synthase (491 aa).

Residues 250–441 (DLQITVVRLP…LHGLFDNGPW (192 aa)) form the GATase cobBQ-type domain. Cysteine 331 functions as the Nucleophile in the catalytic mechanism. The active site involves histidine 433.

It belongs to the CobB/CobQ family. CobQ subfamily.

It participates in cofactor biosynthesis; adenosylcobalamin biosynthesis. Catalyzes amidations at positions B, D, E, and G on adenosylcobyrinic A,C-diamide. NH(2) groups are provided by glutamine, and one molecule of ATP is hydrogenolyzed for each amidation. In Trichormus variabilis (strain ATCC 29413 / PCC 7937) (Anabaena variabilis), this protein is Cobyric acid synthase.